The chain runs to 85 residues: Large ribosomal subunit protein bL27 (85 aa).

The segment at 1 to 21 (MAHKKGQGSTQNNRDSAGRRL) is disordered.

The protein belongs to the bacterial ribosomal protein bL27 family.

The sequence is that of Large ribosomal subunit protein bL27 from Wolinella succinogenes (strain ATCC 29543 / DSM 1740 / CCUG 13145 / JCM 31913 / LMG 7466 / NCTC 11488 / FDC 602W) (Vibrio succinogenes).